Consider the following 747-residue polypeptide: Probable alpha-galactosidase C (747 aa).

The signal sequence occupies residues 1–24; it reads MVAFMNSATFVAGLFTLWSRPIWA. N-linked (GlcNAc...) asparagine glycans are attached at residues Asn36, Asn182, Asn190, Asn362, Asn429, and Asn449. Catalysis depends on Asp507, which acts as the Nucleophile. The N-linked (GlcNAc...) asparagine glycan is linked to Asn534. Catalysis depends on Asp569, which acts as the Proton donor.

It belongs to the glycosyl hydrolase 36 family. Homotetramer. Requires Mg(2+) as cofactor. It depends on NAD(+) as a cofactor.

The protein resides in the secreted. It carries out the reaction Hydrolysis of terminal, non-reducing alpha-D-galactose residues in alpha-D-galactosides, including galactose oligosaccharides, galactomannans and galactolipids.. In terms of biological role, hydrolyzes a variety of simple alpha-D-galactoside as well as more complex molecules such as oligosaccharides and polysaccharides. The polypeptide is Probable alpha-galactosidase C (aglC) (Aspergillus terreus (strain NIH 2624 / FGSC A1156)).